We begin with the raw amino-acid sequence, 429 residues long: Glutamate-1-semialdehyde 2,1-aminomutase (429 aa).

At lysine 267 the chain carries N6-(pyridoxal phosphate)lysine.

The protein belongs to the class-III pyridoxal-phosphate-dependent aminotransferase family. HemL subfamily. Homodimer. It depends on pyridoxal 5'-phosphate as a cofactor.

The protein localises to the cytoplasm. The enzyme catalyses (S)-4-amino-5-oxopentanoate = 5-aminolevulinate. The protein operates within porphyrin-containing compound metabolism; protoporphyrin-IX biosynthesis; 5-aminolevulinate from L-glutamyl-tRNA(Glu): step 2/2. This Xanthomonas oryzae pv. oryzae (strain MAFF 311018) protein is Glutamate-1-semialdehyde 2,1-aminomutase.